The following is a 330-amino-acid chain: Fructose-1,6-bisphosphatase class 1 (330 aa).

E84, D103, L105, and D106 together coordinate Mg(2+). Substrate contacts are provided by residues 106 to 109, N196, and K262; that span reads DGSS. E268 lines the Mg(2+) pocket.

It belongs to the FBPase class 1 family. In terms of assembly, homotetramer. The cofactor is Mg(2+).

The protein resides in the cytoplasm. The enzyme catalyses beta-D-fructose 1,6-bisphosphate + H2O = beta-D-fructose 6-phosphate + phosphate. It participates in carbohydrate biosynthesis; gluconeogenesis. This is Fructose-1,6-bisphosphatase class 1 from Shewanella putrefaciens (strain CN-32 / ATCC BAA-453).